We begin with the raw amino-acid sequence, 400 residues long: Cytohesin-2 (400 aa).

The stretch at 10–63 (DLTPEERMELENIRRRKQELLVEIQRLREELSEAMSEVEGLEANEGSKTLQRNR) forms a coiled coil. Positions 72–201 (FNMDPKKGIQ…VIMLNTSLHN (130 aa)) constitute an SEC7 domain. Positions 259-376 (NPDREGWLLK…WIKSIQAAVS (118 aa)) constitute a PH domain. A 1,2-diacyl-sn-glycero-3-phospho-(1D-myo-inositol-3,4,5-trisphosphate)-binding positions include 268–276 (KLGGGRVKT), arginine 280, tyrosine 291, arginine 301, lysine 339, asparagine 350, and histidine 351. The segment at 387-395 (RKKRISVKK) is C-terminal autoinhibitory region.

Heteromer. Composed of TAMALIN, CYTH2 and at least one GRM1. Interacts with ARRB1. Interacts with ARL4D; the interaction is direct. Directly interacts with CCDC120 through the coiled coil domain; this interaction stabilizes CCDC120, possibly by preventing its ubiquitination, and is required for neurite growth in neuroblastoma cells. Interacts with ARF1. Interacts with FRMD4A. Interacts (via N-terminal domain) with INAVA (via N-terminal domain). As to expression, widely expressed.

The protein localises to the cell membrane. The protein resides in the cytoplasm. It is found in the cell projection. It localises to the growth cone. Its subcellular location is the cell junction. The protein localises to the tight junction. The protein resides in the adherens junction. In terms of biological role, acts as a guanine-nucleotide exchange factor (GEF). Promotes guanine-nucleotide exchange on ARF1, ARF3 and ARF6. Activates ARF factors through replacement of GDP with GTP. The cell membrane form, in association with ARL4 proteins, recruits ARF6 to the plasma membrane. Involved in neurite growth. The sequence is that of Cytohesin-2 from Homo sapiens (Human).